Consider the following 248-residue polypeptide: Triosephosphate isomerase (248 aa).

Residues N10 and K12 each coordinate substrate. Residue H95 is the Electrophile of the active site. The Proton acceptor role is filled by E165.

The protein belongs to the triosephosphate isomerase family. Homodimer.

It carries out the reaction D-glyceraldehyde 3-phosphate = dihydroxyacetone phosphate. It participates in carbohydrate biosynthesis; gluconeogenesis. The protein operates within carbohydrate degradation; glycolysis; D-glyceraldehyde 3-phosphate from glycerone phosphate: step 1/1. The sequence is that of Triosephosphate isomerase (tpi-1) from Neurospora crassa (strain ATCC 24698 / 74-OR23-1A / CBS 708.71 / DSM 1257 / FGSC 987).